Reading from the N-terminus, the 26-residue chain is Conotoxin Eb6.18 (26 aa).

Intrachain disulfides connect Cys7–Cys18 and Cys13–Cys25.

It belongs to the conotoxin O1 superfamily. As to expression, expressed by the venom duct.

It localises to the secreted. The sequence is that of Conotoxin Eb6.18 (E1) from Conus ebraeus (Hebrew cone).